We begin with the raw amino-acid sequence, 167 residues long: CS6 fimbrial subunit B (167 aa).

The N-terminal stretch at 1-21 is a signal peptide; that stretch reads MLKKIIPAIVLIAGTSGVVNA.

It is found in the fimbrium. In Escherichia coli, this protein is CS6 fimbrial subunit B (cssB).